A 299-amino-acid polypeptide reads, in one-letter code: Bifunctional protein FolD (299 aa).

Residues 166–168, Ser191, and Ile232 contribute to the NADP(+) site; that span reads GRS.

The protein belongs to the tetrahydrofolate dehydrogenase/cyclohydrolase family. In terms of assembly, homodimer.

It carries out the reaction (6R)-5,10-methylene-5,6,7,8-tetrahydrofolate + NADP(+) = (6R)-5,10-methenyltetrahydrofolate + NADPH. It catalyses the reaction (6R)-5,10-methenyltetrahydrofolate + H2O = (6R)-10-formyltetrahydrofolate + H(+). It participates in one-carbon metabolism; tetrahydrofolate interconversion. In terms of biological role, catalyzes the oxidation of 5,10-methylenetetrahydrofolate to 5,10-methenyltetrahydrofolate and then the hydrolysis of 5,10-methenyltetrahydrofolate to 10-formyltetrahydrofolate. The polypeptide is Bifunctional protein FolD (Dinoroseobacter shibae (strain DSM 16493 / NCIMB 14021 / DFL 12)).